Reading from the N-terminus, the 344-residue chain is MDENKKRALSAALSQIEKQFGKGSVMRMGDRVIEAVEVIPTGSLMLDIALGIGGLPKGRVVEIYGPESSGKTTLTLQAIAECQKNGGTAAFIDAEHALDPIYAAKLGVNVDDLLLSQPDTGEQALEIADMLVRSGSVDIVVVDSVAALTPKAEIEGEMGDQLPGLQARLMSQALRKLTGNIKRSNTLVVFINQLRMKIGVMMPGQSPEVTTGGNALKFYASVRLDIRRIGAIKKGDEIIGNQTKIKVVKNKLAPPFKQVVTEILYGEGISREGELIDMGVEAKLVDKAGAWYSYGDERIGQGKDNARTYLRDNSQVATRLEAELREKFQPAEAPREAGDDEDKE.

Position 65–72 (65–72 (GPESSGKT)) interacts with ATP. The span at 323 to 337 (ELREKFQPAEAPREA) shows a compositional bias: basic and acidic residues. The interval 323–344 (ELREKFQPAEAPREAGDDEDKE) is disordered.

The protein belongs to the RecA family.

The protein localises to the cytoplasm. In terms of biological role, can catalyze the hydrolysis of ATP in the presence of single-stranded DNA, the ATP-dependent uptake of single-stranded DNA by duplex DNA, and the ATP-dependent hybridization of homologous single-stranded DNAs. It interacts with LexA causing its activation and leading to its autocatalytic cleavage. This Xanthomonas axonopodis pv. citri (strain 306) protein is Protein RecA.